Here is a 257-residue protein sequence, read N- to C-terminus: Lipid A 4'-phosphatase (257 aa).

Transmembrane regions (helical) follow at residues 21–41 (FGAF…FRAF), 85–105 (IFFR…IECY), 119–139 (KLKV…NVIL), 174–194 (CSFV…LLFV), 201–221 (ALVP…LSFG), and 225–245 (LSDV…LLAL).

This sequence belongs to the lipid A LpxF 4'-phosphatase family.

The protein resides in the cell inner membrane. It participates in bacterial outer membrane biogenesis; LPS lipid A biosynthesis. Functionally, probably removes the 4'-phosphate moiety from lipid A species. Not seen to act on other membrane components, nor does it dephosphorylate the 1-phosphate group of lipid A and/or lipid A precursors. The protein is Lipid A 4'-phosphatase of Rhizobium etli (strain ATCC 51251 / DSM 11541 / JCM 21823 / NBRC 15573 / CFN 42).